Reading from the N-terminus, the 220-residue chain is Charged multivesicular body protein 5 (220 aa).

A compositionally biased stretch (basic residues) spans 1-10 (MNRIFGRGKP). Positions 1–27 (MNRIFGRGKPKGPPPNLTDCISGVDSR) are disordered. Coiled coils occupy residues 25–55 (DSRAESVDKKIARLDAELMKYKDQMKKMRDG) and 121–153 (KNVKIDQIEDLQDQLEDMMEDANEVQEALSRSY). Positions 178–206 (DDNSYLDEASSAPAIPEGAPGDRTTNRDG) are disordered.

This sequence belongs to the SNF7 family. As to quaternary structure, probable peripherally associated component of the endosomal sorting required for transport complex III (ESCRT-III).

The protein localises to the cytoplasm. The protein resides in the cytosol. It localises to the endosome membrane. Its function is as follows. Probable peripherally associated component of the endosomal sorting required for transport complex III (ESCRT-III) which is involved in multivesicular bodies (MVBs) formation and sorting of endosomal cargo proteins into MVBs. MVBs contain intraluminal vesicles (ILVs) that are generated by invagination and scission from the limiting membrane of the endosome and mostly are delivered to lysosomes enabling degradation of membrane proteins, such as stimulated growth factor receptors, lysosomal enzymes and lipids. This chain is Charged multivesicular body protein 5 (chmp5), found in Danio rerio (Zebrafish).